Consider the following 271-residue polypeptide: RELT-like protein 1 (271 aa).

The N-terminal stretch at Met1 to Ser23 is a signal peptide. At Ser24–Glu57 the chain is on the extracellular side. The segment at Ala28–Asn53 is disordered. N-linked (GlcNAc...) asparagine glycosylation is found at Asn31 and Asn49. The span at Asn31–Gly52 shows a compositional bias: polar residues. A helical transmembrane segment spans residues Tyr58–Cys78. Over His79 to Glu271 the chain is Cytoplasmic. Residues Thr89–Asn113 adopt a coiled-coil conformation. Phosphoserine occurs at positions 109 and 114. Disordered regions lie at residues Asp145 to Lys173 and Val233 to Glu271. Pro residues predominate over residues Pro155–Leu165. The span at Val233–Ser244 shows a compositional bias: basic and acidic residues. Ser244 and Ser247 each carry phosphoserine.

The protein belongs to the RELT family. Interacts with RELT, RELL2 and OXSR1. Interacts with PLSCR1. Phosphorylated in vitro by OXSR1. Widely expressed. Expressed at highest levels in the placenta, skeletal muscle, spleen and testis.

It localises to the cell membrane. Functionally, induces activation of MAPK14/p38 cascade, when overexpressed. Induces apoptosis, when overexpressed. The protein is RELT-like protein 1 (RELL1) of Homo sapiens (Human).